A 176-amino-acid chain; its full sequence is Large ribosomal subunit protein uL6 (176 aa).

This sequence belongs to the universal ribosomal protein uL6 family. In terms of assembly, part of the 50S ribosomal subunit.

In terms of biological role, this protein binds to the 23S rRNA, and is important in its secondary structure. It is located near the subunit interface in the base of the L7/L12 stalk, and near the tRNA binding site of the peptidyltransferase center. The sequence is that of Large ribosomal subunit protein uL6 from Burkholderia lata (strain ATCC 17760 / DSM 23089 / LMG 22485 / NCIMB 9086 / R18194 / 383).